The following is a 359-amino-acid chain: Protein Wnt-8a (359 aa).

Residues 1–25 (MNPCQIFASLVMSICCHILSSTAWS) form the signal peptide. Cysteines 55 and 66 form a disulfide. A glycan (N-linked (GlcNAc...) asparagine) is linked at Asn104. Intrachain disulfides connect Cys105-Cys113, Cys115-Cys133, Cys181-Cys195, Cys183-Cys190, Cys260-Cys298, Cys276-Cys291, Cys295-Cys337, Cys313-Cys328, Cys315-Cys325, and Cys320-Cys321. Ser187 carries the O-palmitoleoyl serine lipid modification. Asn263 and Asn282 each carry an N-linked (GlcNAc...) asparagine glycan. Asn348 is a glycosylation site (N-linked (GlcNAc...) asparagine).

Belongs to the Wnt family. In terms of processing, palmitoleoylation is required for efficient binding to frizzled receptors. Depalmitoleoylation leads to Wnt signaling pathway inhibition. Proteolytic processing by tiki1 and tiki2 promotes oxidation and formation of large disulfide-bond oligomers, leading to inactivation of wnt8. As to expression, expressed in the margin of the pregastrula embryo destined to be the future mesoderm.

The protein localises to the secreted. Its subcellular location is the extracellular space. It localises to the extracellular matrix. In terms of biological role, ligand for members of the frizzled family of seven transmembrane receptors. Required for mesoderm and neural ectoderm patterning during gastrulation. Involved in axis formation during embryonic development, via activation of canonical Wnt/CTNNB1 signaling. May be involved in the specification of the spatial patterns of expression of Gsc and other regulatory genes leading to the establishment of the embryonic axis. In Danio rerio (Zebrafish), this protein is Protein Wnt-8a (wnt8a).